We begin with the raw amino-acid sequence, 23 residues long: Profilin (23 aa).

Belongs to the profilin family. As to quaternary structure, occurs in many kinds of cells as a complex with monomeric actin in a 1:1 ratio.

The protein resides in the cytoplasm. It is found in the cytoskeleton. Functionally, binds to actin and affects the structure of the cytoskeleton. At high concentrations, profilin prevents the polymerization of actin, whereas it enhances it at low concentrations. By binding to PIP2, it inhibits the formation of IP3 and DG. This Beta vulgaris (Sugar beet) protein is Profilin.